The sequence spans 238 residues: N-methyltransferase vrtF (238 aa).

This sequence belongs to the methyltransferase superfamily.

The protein operates within secondary metabolite biosynthesis; terpenoid biosynthesis. In terms of biological role, N-methyltransferase; part of the gene cluster that mediates the biosynthesis of viridicatumtoxin, a tetracycline-like fungal meroterpenoid with a unique, fused spirobicyclic ring system. The first step of the pathway is the production of the malonamoyl-CoA starter unit for the polyketide synthase vrtA. The aldolase vrtJ may be involved in the synthesis of the malonamate substrate for malonamoyl-CoA synthetase vrtB. The polyketide synthase vrtA then may utilize the malonamoyl-CoA starter unit, followed by sequential condensation of eight malonyl-CoA units to form the polyketide backbone. The cyclization of the last ring could be mediated by the lactamase-like protein vrtG. The proposed post-PKS tailoring steps are a hydroxylation at C5 catalyzed the cytochrome P450 monooxygenase vrtE, a hydroxylation at C12a catalyzed by VrtH and/or VrtI, and an O-methylation by the O-methyltransferase vrtF. VrtC is then proposed to catalyze the transfer of a geranyl group synthesized by vrtD to the aromatic C ring of the tetracyclic polyketide intermediate of viridicatumtoxin to yield previridicatumtoxin. Finally, the cytochrome P450 monooxygenase vrtK catalyzes the spirocyclization of the geranyl moiety of previridicatumtoxin to afford viridicatumtoxin. This Penicillium aethiopicum protein is N-methyltransferase vrtF.